The primary structure comprises 136 residues: Protein PsiE (136 aa).

The next 4 membrane-spanning stretches (helical) occupy residues 15–35, 55–75, 82–102, and 108–128; these read ILQN…VLFL, YELV…ALIV, FHFP…RLII, and PMDV…LWLC.

The protein belongs to the PsiE family.

It localises to the cell inner membrane. The chain is Protein PsiE from Salmonella arizonae (strain ATCC BAA-731 / CDC346-86 / RSK2980).